A 530-amino-acid polypeptide reads, in one-letter code: Probable NADH-specific resorcinol 4-hydroxylase (530 aa).

The catalysed reaction is resorcinol + NADH + O2 + H(+) = benzene-1,2,4-triol + NAD(+) + H2O. In terms of biological role, single-component hydroxylase that is part of the gamma-resorcylate (GRA) degradation pathway. GRA is initially converted by GRA decarboxylase to resorcinol, which is hydroxylated by resorcinol 4-hydroxylase. The polypeptide is Probable NADH-specific resorcinol 4-hydroxylase (tsdB) (Rhodococcus jostii (strain RHA1)).